Consider the following 98-residue polypeptide: Small ribosomal subunit protein eS24 (98 aa).

The protein belongs to the eukaryotic ribosomal protein eS24 family.

In Thermococcus sibiricus (strain DSM 12597 / MM 739), this protein is Small ribosomal subunit protein eS24.